Reading from the N-terminus, the 527-residue chain is MYPYCLKYLTNGLRSKQMINFLCIQNILSARTLKICRFRFLPTPSHPTHKMAQETRAISSISEAANKRARKLSKRRAKKPVEEGSSGHVLLLEIENLIEKPVLANVPFERFQEIEVKISYLSSSGDGIGLVCNDQYAVVVPFTLPGDIVKAKLHFLADTYALADFLEVISPSEDRDDTLIKCPYFAKCGGCQYQMLSYDKQLLQKKRVVEKAFQYYSKLDSSLLPAIKDTVGSPLQYNYRTKITPHFDVPKGGTKGPLIIGFQEKGRRRVMDIEECPIATKTINEEYPKIIEDVQSRANTFKRGATILMRDSATEDGKHCVITDHKMIVREQFGDLSFTFPAGAFFQNNNSILEKFTSYVREQLLNPFGRKEHQRPKYFVDAYCGSGLFSVACSKGFLSVIGVEISADSVRYAEENAKRNNVSNATFIVGQAEKIFSSIETPPNETAMVIDPPRKGCDQSFLNQLLEYSPYRIVYISCNVHTQARDVGFLLSQEKGRSYKIDEIRGFDLFPQSHHVESILTLTKVVS.

Positions 107-167 (PFERFQEIEV…DTYALADFLE (61 aa)) constitute a TRAM domain. [4Fe-4S] cluster-binding residues include Cys182, Cys188, Cys191, and Cys276. S-adenosyl-L-methionine-binding residues include Gln347, Tyr383, Glu404, and Asp451. Cys478 functions as the Nucleophile in the catalytic mechanism. Glu517 acts as the Proton acceptor in catalysis.

Belongs to the class I-like SAM-binding methyltransferase superfamily. RNA M5U methyltransferase family.

It catalyses the reaction uridine(54) in tRNA + S-adenosyl-L-methionine = 5-methyluridine(54) in tRNA + S-adenosyl-L-homocysteine + H(+). Its function is as follows. Catalyzes the formation of 5-methyl-uridine at position 54 (m5U54) in all tRNA. May also have a role in tRNA stabilization or maturation. The polypeptide is tRNA (uracil(54)-C(5))-methyltransferase (Schizosaccharomyces pombe (strain 972 / ATCC 24843) (Fission yeast)).